Here is a 497-residue protein sequence, read N- to C-terminus: Putative diacyglycerol O-acyltransferase MT3584 (497 aa).

The active-site Proton acceptor is H143.

It belongs to the long-chain O-acyltransferase family.

The enzyme catalyses an acyl-CoA + a 1,2-diacyl-sn-glycerol = a triacyl-sn-glycerol + CoA. Its pathway is glycerolipid metabolism; triacylglycerol biosynthesis. In Mycobacterium tuberculosis (strain CDC 1551 / Oshkosh), this protein is Putative diacyglycerol O-acyltransferase MT3584.